A 328-amino-acid polypeptide reads, in one-letter code: D-cysteine desulfhydrase (328 aa).

Residue lysine 51 is modified to N6-(pyridoxal phosphate)lysine.

This sequence belongs to the ACC deaminase/D-cysteine desulfhydrase family. As to quaternary structure, homodimer. It depends on pyridoxal 5'-phosphate as a cofactor.

It carries out the reaction D-cysteine + H2O = hydrogen sulfide + pyruvate + NH4(+) + H(+). Its function is as follows. Catalyzes the alpha,beta-elimination reaction of D-cysteine and of several D-cysteine derivatives. It could be a defense mechanism against D-cysteine. This Escherichia coli O9:H4 (strain HS) protein is D-cysteine desulfhydrase.